The sequence spans 333 residues: ATP synthase subunit a (333 aa).

The first 32 residues, 1–32, serve as a signal peptide directing secretion; that stretch reads MIYLHNKRKGMLKRLSALIVIGLLMNLPAVFA. 7 helical membrane passes run 100 to 120, 161 to 181, 185 to 205, 229 to 249, 254 to 274, 279 to 299, and 300 to 320; these read HVVM…GVGN, FMPF…IGLV, ATAT…FLVT, LMWI…PFAL, FANM…IFVF, IAPV…LVAF, and LQAY…VAHE.

This sequence belongs to the ATPase A chain family. In terms of assembly, F-type ATPases have 2 components, CF(1) - the catalytic core - and CF(0) - the membrane proton channel. CF(1) has five subunits: alpha(3), beta(3), gamma(1), delta(1), epsilon(1). CF(0) has four main subunits: a, b, b' and c.

The protein resides in the cell inner membrane. Key component of the proton channel; it plays a direct role in the translocation of protons across the membrane. In Chloroherpeton thalassium (strain ATCC 35110 / GB-78), this protein is ATP synthase subunit a.